We begin with the raw amino-acid sequence, 507 residues long: Rho GTPase-activating protein 19 (507 aa).

Residues 112–305 enclose the Rho-GAP domain; it reads APLTEEGIAQ…FMIKHSQKLF (194 aa). Disordered stretches follow at residues 344-371, 400-419, and 483-507; these read FLKH…QQHT, KNTP…KKHV, and DLQI…ETSI. Over residues 355-369 the composition is skewed to low complexity; sequence SSPSSSTSLQEQTQQ. A compositionally biased stretch (polar residues) spans 400–413; that stretch reads KNTPRTPVSDTQVP. The span at 483–492 shows a compositional bias: basic and acidic residues; the sequence is DLQIRKEASS.

GTPase activator for the Rho-type GTPases by converting them to an inactive GDP-bound state. The protein is Rho GTPase-activating protein 19 (arhgap19) of Xenopus laevis (African clawed frog).